The primary structure comprises 330 residues: tRNA U34 carboxymethyltransferase (330 aa).

Residues K91, W105, K110, G130, 152-154, 181-182, M196, Y200, and R315 contribute to the carboxy-S-adenosyl-L-methionine site; these read DPS and IE.

It belongs to the class I-like SAM-binding methyltransferase superfamily. CmoB family. As to quaternary structure, homotetramer.

It carries out the reaction carboxy-S-adenosyl-L-methionine + 5-hydroxyuridine(34) in tRNA = 5-carboxymethoxyuridine(34) in tRNA + S-adenosyl-L-homocysteine + H(+). Functionally, catalyzes carboxymethyl transfer from carboxy-S-adenosyl-L-methionine (Cx-SAM) to 5-hydroxyuridine (ho5U) to form 5-carboxymethoxyuridine (cmo5U) at position 34 in tRNAs. The sequence is that of tRNA U34 carboxymethyltransferase from Shewanella sp. (strain ANA-3).